Reading from the N-terminus, the 453-residue chain is Protein amnionless (453 aa).

The first 19 residues, 1–19 (MGVLGRVLLWLQLCALTQA), serve as a signal peptide directing secretion. Topologically, residues 20 to 357 (VSKLWVPNTD…ESGAHVWGSS (338 aa)) are extracellular. Residue N35 is glycosylated (N-linked (GlcNAc...) asparagine). Cystine bridges form between C43-C96, C137-C213, C205-C211, C223-C249, C234-C250, and C239-C253. Residues 67–87 (SDMLLPLDGELVLASGAGFGV) form an interaction with CUBN region. The VWFC domain occupies 202 to 254 (PEDCADPSGCVCGNAEAQPWICAALLQPLGGRCPQAACHSALRPQGQCCDLCG). The chain crosses the membrane as a helical span at residues 358–378 (AAGLAGGVAAAVLLALLVLLV). The Cytoplasmic portion of the chain corresponds to 379–453 (APPLLRRAGR…PLFAGAEAEA (75 aa)).

Interacts (via extracellular region) with CUBN/cubilin, giving rise to a huge complex containing one AMN chain and three CUBN chains. In terms of processing, N-glycosylated. A soluble form arises by proteolytic removal of the membrane anchor. As to expression, detected in proximal tubules in the kidney cortex (at protein level). Long isoforms are highly expressed in small intestine, colon and kidney (renal proximal tubule epithelial cells). Shorter isoforms are detected at lower levels in testis, thymus and peripheral blood leukocytes.

It is found in the apical cell membrane. It localises to the cell membrane. The protein resides in the endosome membrane. Its subcellular location is the membrane. The protein localises to the coated pit. It is found in the secreted. Its function is as follows. Membrane-bound component of the endocytic receptor formed by AMN and CUBN. Required for normal CUBN glycosylation and trafficking to the cell surface. The complex formed by AMN and CUBN is required for efficient absorption of vitamin B12. Required for normal CUBN-mediated protein transport in the kidney. The sequence is that of Protein amnionless (AMN) from Homo sapiens (Human).